The chain runs to 400 residues: Queuine tRNA-ribosyltransferase catalytic subunit 1 (400 aa).

The Proton acceptor role is filled by aspartate 103. Queuine is bound by residues 103-107 (DSGGF), aspartate 157, glutamine 200, and glycine 227. The RNA binding stretch occupies residues 258 to 264 (GVGYAVD). Catalysis depends on aspartate 277, which acts as the Nucleophile. The interval 282 to 286 (TRTAR) is RNA binding; important for wobble base 34 recognition. Zn(2+) contacts are provided by cysteine 315, cysteine 317, cysteine 320, and histidine 345.

The protein belongs to the queuine tRNA-ribosyltransferase family. As to quaternary structure, heterodimer of a catalytic subunit qtrt1 and an accessory subunit qtrt2. The cofactor is Zn(2+).

It is found in the cytoplasm. It localises to the mitochondrion outer membrane. It catalyses the reaction guanosine(34) in tRNA + queuine = queuosine(34) in tRNA + guanine. Functionally, catalytic subunit of the queuine tRNA-ribosyltransferase (TGT) that catalyzes the base-exchange of a guanine (G) residue with queuine (Q) at position 34 (anticodon wobble position) in tRNAs with GU(N) anticodons (tRNA-Asp, -Asn, -His and -Tyr), resulting in the hypermodified nucleoside queuosine (7-(((4,5-cis-dihydroxy-2-cyclopenten-1-yl)amino)methyl)-7-deazaguanosine). Catalysis occurs through a double-displacement mechanism. The nucleophile active site attacks the C1' of nucleotide 34 to detach the guanine base from the RNA, forming a covalent enzyme-RNA intermediate. The proton acceptor active site deprotonates the incoming queuine, allowing a nucleophilic attack on the C1' of the ribose to form the product. The polypeptide is Queuine tRNA-ribosyltransferase catalytic subunit 1 (Danio rerio (Zebrafish)).